Consider the following 106-residue polypeptide: Large ribosomal subunit protein bL21c (106 aa).

The protein belongs to the bacterial ribosomal protein bL21 family. In terms of assembly, part of the 50S ribosomal subunit.

The protein resides in the plastid. It is found in the chloroplast. In terms of biological role, this protein binds to 23S rRNA. In Gracilaria tenuistipitata var. liui (Red alga), this protein is Large ribosomal subunit protein bL21c.